The following is a 115-amino-acid chain: Large ribosomal subunit protein bL19 (115 aa).

Belongs to the bacterial ribosomal protein bL19 family.

Functionally, this protein is located at the 30S-50S ribosomal subunit interface and may play a role in the structure and function of the aminoacyl-tRNA binding site. In Citrobacter koseri (strain ATCC BAA-895 / CDC 4225-83 / SGSC4696), this protein is Large ribosomal subunit protein bL19.